Here is a 141-residue protein sequence, read N- to C-terminus: Ribonuclease VapC38 (141 aa).

2 residues coordinate Mg(2+): aspartate 5 and aspartate 102.

The protein belongs to the PINc/VapC protein family. The cofactor is Mg(2+).

The protein localises to the secreted. Its function is as follows. Toxic component of a type II toxin-antitoxin (TA) system. An RNase. Its cognate antitoxin is VapB38. The chain is Ribonuclease VapC38 from Mycobacterium tuberculosis (strain ATCC 25618 / H37Rv).